Here is a 39-residue protein sequence, read N- to C-terminus: MQATLIKPTIFTHQPILEKLFKSQSMTQEESXQLFAAIV.

It belongs to the anthranilate phosphoribosyltransferase family. Homodimer.

The enzyme catalyses N-(5-phospho-beta-D-ribosyl)anthranilate + diphosphate = 5-phospho-alpha-D-ribose 1-diphosphate + anthranilate. It participates in amino-acid biosynthesis; L-tryptophan biosynthesis; L-tryptophan from chorismate: step 2/5. Its function is as follows. Catalyzes the transfer of the phosphoribosyl group of 5-phosphorylribose-1-pyrophosphate (PRPP) to anthranilate to yield N-(5'-phosphoribosyl)-anthranilate (PRA). This Pectobacterium carotovorum (Erwinia carotovora) protein is Anthranilate phosphoribosyltransferase (trpD).